We begin with the raw amino-acid sequence, 561 residues long: 2-succinyl-5-enolpyruvyl-6-hydroxy-3-cyclohexene-1-carboxylate synthase (561 aa).

This sequence belongs to the TPP enzyme family. MenD subfamily. In terms of assembly, homodimer. It depends on Mg(2+) as a cofactor. The cofactor is Mn(2+). Requires thiamine diphosphate as cofactor.

It carries out the reaction isochorismate + 2-oxoglutarate + H(+) = 5-enolpyruvoyl-6-hydroxy-2-succinyl-cyclohex-3-ene-1-carboxylate + CO2. It participates in quinol/quinone metabolism; 1,4-dihydroxy-2-naphthoate biosynthesis; 1,4-dihydroxy-2-naphthoate from chorismate: step 2/7. Its pathway is quinol/quinone metabolism; menaquinone biosynthesis. Its function is as follows. Catalyzes the thiamine diphosphate-dependent decarboxylation of 2-oxoglutarate and the subsequent addition of the resulting succinic semialdehyde-thiamine pyrophosphate anion to isochorismate to yield 2-succinyl-5-enolpyruvyl-6-hydroxy-3-cyclohexene-1-carboxylate (SEPHCHC). In Proteus mirabilis (strain HI4320), this protein is 2-succinyl-5-enolpyruvyl-6-hydroxy-3-cyclohexene-1-carboxylate synthase.